We begin with the raw amino-acid sequence, 467 residues long: Argininosuccinate lyase (467 aa).

Belongs to the lyase 1 family. Argininosuccinate lyase subfamily.

It localises to the cytoplasm. The catalysed reaction is 2-(N(omega)-L-arginino)succinate = fumarate + L-arginine. Its pathway is amino-acid biosynthesis; L-arginine biosynthesis; L-arginine from L-ornithine and carbamoyl phosphate: step 3/3. This Thioalkalivibrio sulfidiphilus (strain HL-EbGR7) protein is Argininosuccinate lyase.